Reading from the N-terminus, the 623-residue chain is Chaperone protein DnaK (623 aa).

A compositionally biased stretch (low complexity) spans 582–603 (QQQQAAEQAAQQQSGGQQASGS). The interval 582 to 623 (QQQQAAEQAAQQQSGGQQASGSNPGKDPNVVDADYEVVNDKK) is disordered. A compositionally biased stretch (acidic residues) spans 614–623 (ADYEVVNDKK).

This sequence belongs to the heat shock protein 70 family.

In terms of biological role, acts as a chaperone. This chain is Chaperone protein DnaK, found in Methanocella arvoryzae (strain DSM 22066 / NBRC 105507 / MRE50).